Here is a 635-residue protein sequence, read N- to C-terminus: tRNA 5-methylaminomethyl-2-thiouridine biosynthesis bifunctional protein MnmC (635 aa).

The tRNA (mnm(5)s(2)U34)-methyltransferase stretch occupies residues 1-227; that stretch reads MSEPIDWLPD…KRSNLQAEFD (227 aa). The tract at residues 254 to 635 is FAD-dependent cmnm(5)s(2)U34 oxidoreductase; sequence IGGGLSGAAV…ALSTERLPAD (382 aa).

The protein in the N-terminal section; belongs to the methyltransferase superfamily. tRNA (mnm(5)s(2)U34)-methyltransferase family. In the C-terminal section; belongs to the DAO family. The cofactor is FAD.

It is found in the cytoplasm. The catalysed reaction is 5-aminomethyl-2-thiouridine(34) in tRNA + S-adenosyl-L-methionine = 5-methylaminomethyl-2-thiouridine(34) in tRNA + S-adenosyl-L-homocysteine + H(+). Catalyzes the last two steps in the biosynthesis of 5-methylaminomethyl-2-thiouridine (mnm(5)s(2)U) at the wobble position (U34) in tRNA. Catalyzes the FAD-dependent demodification of cmnm(5)s(2)U34 to nm(5)s(2)U34, followed by the transfer of a methyl group from S-adenosyl-L-methionine to nm(5)s(2)U34, to form mnm(5)s(2)U34. In Paracidovorax citrulli (strain AAC00-1) (Acidovorax citrulli), this protein is tRNA 5-methylaminomethyl-2-thiouridine biosynthesis bifunctional protein MnmC.